Reading from the N-terminus, the 145-residue chain is Basic phospholipase A2 cPm05 (145 aa).

An N-terminal signal peptide occupies residues 1-21 (MYPAHLLVLLAVCISLLGASA). The propeptide occupies 22–27 (IPPLPL). 7 cysteine pairs are disulfide-bonded: C38/C98, C54/C144, C56/C72, C71/C125, C78/C118, C87/C111, and C105/C116. Y55, G57, and G59 together coordinate Ca(2+). H75 is an active-site residue. D76 is a binding site for Ca(2+). D119 is a catalytic residue.

The protein belongs to the phospholipase A2 family. Group I subfamily. D49 sub-subfamily. Requires Ca(2+) as cofactor. As to expression, expressed by the venom gland.

The protein resides in the secreted. It catalyses the reaction a 1,2-diacyl-sn-glycero-3-phosphocholine + H2O = a 1-acyl-sn-glycero-3-phosphocholine + a fatty acid + H(+). Its function is as follows. PLA2 catalyzes the calcium-dependent hydrolysis of the 2-acyl groups in 3-sn-phosphoglycerides. The polypeptide is Basic phospholipase A2 cPm05 (Laticauda semifasciata (Black-banded sea krait)).